The sequence spans 89 residues: Small ribosomal subunit protein uS15 (89 aa).

This sequence belongs to the universal ribosomal protein uS15 family. As to quaternary structure, part of the 30S ribosomal subunit. Forms a bridge to the 50S subunit in the 70S ribosome, contacting the 23S rRNA.

Functionally, one of the primary rRNA binding proteins, it binds directly to 16S rRNA where it helps nucleate assembly of the platform of the 30S subunit by binding and bridging several RNA helices of the 16S rRNA. In terms of biological role, forms an intersubunit bridge (bridge B4) with the 23S rRNA of the 50S subunit in the ribosome. The sequence is that of Small ribosomal subunit protein uS15 from Lactobacillus helveticus (strain DPC 4571).